Reading from the N-terminus, the 87-residue chain is Small ribosomal subunit protein bS20 (87 aa).

A disordered region spans residues methionine 1–serine 26.

The protein belongs to the bacterial ribosomal protein bS20 family.

Binds directly to 16S ribosomal RNA. This Klebsiella pneumoniae (strain 342) protein is Small ribosomal subunit protein bS20.